Here is a 579-residue protein sequence, read N- to C-terminus: Mitogen-activated protein kinase kinase kinase 7 (579 aa).

An interaction with MAPK8IP1 region spans residues 1–300; that stretch reads MSTASAASSS…FPGADEPLQY (300 aa). The Protein kinase domain maps to 36-291; the sequence is IEVEEVVGRG…KIMTHLMRYF (256 aa). Residues 42–50 and lysine 63 contribute to the ATP site; that span reads VGRGAFGVV. Residue lysine 72 forms a Glycyl lysine isopeptide (Lys-Gly) (interchain with G-Cter in ubiquitin) linkage. Aspartate 156 serves as the catalytic Proton acceptor. A Glycyl lysine isopeptide (Lys-Gly) (interchain with G-Cter in ubiquitin) cross-link involves residue lysine 158. Phosphothreonine; by autocatalysis is present on residues threonine 184 and threonine 187. Residue serine 192 is modified to Phosphoserine; by autocatalysis. Lysine 209 participates in a covalent cross-link: Glycyl lysine isopeptide (Lys-Gly) (interchain with G-Cter in ubiquitin). 2 disordered regions span residues 301 to 338 and 354 to 391; these read PCQY…MEQV and KNQA…MSAD. The span at 306 to 338 shows a compositional bias: polar residues; it reads DEGQSNSATSTGSFMDIASTNTSNKSDTNMEQV. Residues 361–375 show a composition bias toward low complexity; the sequence is SESGRLSLGASRGSS. Phosphoserine is present on residues serine 367, serine 389, and serine 412. Polar residues predominate over residues 416 to 425; it reads LTVTGTEPGQ. The segment at 416 to 466 is disordered; it reads LTVTGTEPGQVSSRSSSPSVRMITTSGPTSEKPARSHPWTPDDSTDTNGSD. Residues 426 to 436 are compositionally biased toward low complexity; the sequence is VSSRSSSPSVR. Serine 428 is modified (phosphoserine).

The protein belongs to the protein kinase superfamily. STE Ser/Thr protein kinase family. MAP kinase kinase kinase subfamily. Can form homodimer. Binds both upstream activators and downstream substrates in multimolecular complexes. Interacts with TAB1/MAP3K7IP1, TAB2/MAP3K7IP2 and TAB3/MAP3K7IP3. Identified in the TRIKA2 complex composed of MAP3K7/TAK1, TAB1/MAP3K7IP1 and TAB2/MAP3K7IP2. Interacts with PPM1L and PPM1B/PP2CB. Interaction with PP2A and PPP6C leads to its repressed activity. Interacts with TRAF6 and TAB1/MAP3K7IP1; during IL-1 signaling. Interacts with TAOK1 and TAOK2; interaction with TAOK2 interferes with MAP3K7 interaction with IKKA, thus preventing NF-kappa-B activation. Interacts with DYNC2I2 (via WD domains). Interacts with CYLD and RBCK1. Interacts with TGFBR1; induces MAP3K7/TAK1 activation by TRAF6. Interacts with MAPK8IP1 and SMAD6. Interacts with isoform 1 of VRK2. Interacts with DAB2; the interaction is induced by TGF-beta stimulation and may mediate TGF-beta stimulated JNK activation. Interacts with TRIM5. Part of a complex containing ITCH, NDFIP1 and MAP3K7. Interacts with PLEKHM1 (via N- and C-terminus). Interacts with TRIM8. Found in a complex with SH3RF1, RAC2, MAP2K7/MKK7, MAPK8IP1/JIP1, MAPK8/JNK1 and MAPK9/JNK2. Interacts with SASH1. Interacts with RIPK1. Mg(2+) is required as a cofactor. Association with TAB1/MAP3K7IP1 promotes autophosphorylation and subsequent activation. Association with TAB2/MAP3K7IP2, itself associated with free unanchored Lys-63 polyubiquitin chain, promotes autophosphorylation and subsequent activation of MAP3K7. Dephosphorylation at Thr-187 by PP2A and PPP6C leads to inactivation. In terms of processing, 'Lys-48'-linked polyubiquitination at Lys-72 is induced by TNFalpha, and leads to proteasomal degradation. Undergoes 'Lys-48'-linked polyubiquitination catalyzed by ITCH. 'Lys-63'-linked polyubiquitination at Lys-158 by TRIM8 does not lead to proteasomal degradation but contributes to autophosphorylation and activation. Deubiquitinated by CYLD, a protease that selectively cleaves 'Lys-63'-linked ubiquitin chains.Deubiquitinated by USP19; leading to negative regulation of TNF-alpha- and IL-1beta-triggered NF-kappa-B activation.

The protein localises to the cytoplasm. Its subcellular location is the cell membrane. It catalyses the reaction L-seryl-[protein] + ATP = O-phospho-L-seryl-[protein] + ADP + H(+). It carries out the reaction L-threonyl-[protein] + ATP = O-phospho-L-threonyl-[protein] + ADP + H(+). Activated by pro-inflammatory cytokines and in response to physical and chemical stresses, including osmotic stress, oxidative stress, arsenic and ultraviolet light irradiation. Activated by 'Lys-63'-linked polyubiquitination and by autophosphorylation. Association with TAB1/MAP3K7IP1 and TAB2/MAP3K7IP2 promotes activation through autophosphorylation, whereas PPM1B/PP2CB, PP2A and PPP6C dephosphorylation leads to inactivation. Ceramides are also able to activate MAP3K7/TAK1. Its function is as follows. Serine/threonine kinase which acts as an essential component of the MAP kinase signal transduction pathway. Plays an important role in the cascades of cellular responses evoked by changes in the environment. Mediates signal transduction of TRAF6, various cytokines including interleukin-1 (IL-1), transforming growth factor-beta (TGFB), TGFB-related factors like BMP2 and BMP4, toll-like receptors (TLR), tumor necrosis factor receptor CD40 and B-cell receptor (BCR). Once activated, acts as an upstream activator of the MKK/JNK signal transduction cascade and the p38 MAPK signal transduction cascade through the phosphorylation and activation of several MAP kinase kinases like MAP2K1/MEK1, MAP2K3/MKK3, MAP2K6/MKK6 and MAP2K7/MKK7. These MAP2Ks in turn activate p38 MAPKs and c-jun N-terminal kinases (JNKs); both p38 MAPK and JNK pathways control the transcription factors activator protein-1 (AP-1). Independently of MAP2Ks and p38 MAPKs, acts as a key activator of NF-kappa-B by promoting activation of the I-kappa-B-kinase (IKK) core complex. Mechanistically, recruited to polyubiquitin chains of RIPK2 and IKBKG/NEMO via TAB2/MAP3K7IP2 and TAB3/MAP3K7IP3, and catalyzes phosphorylation and activation of IKBKB/IKKB component of the IKK complex, leading to NF-kappa-B activation. In osmotic stress signaling, plays a major role in the activation of MAPK8/JNK1, but not that of NF-kappa-B. Promotes TRIM5 capsid-specific restriction activity. Phosphorylates RIPK1 at 'Ser-321' which positively regulates RIPK1 interaction with RIPK3 to promote necroptosis but negatively regulates RIPK1 kinase activity and its interaction with FADD to mediate apoptosis. Phosphorylates STING1 in response to cGAMP-activation, promoting association between STEEP1 and STING1 and STING1 translocation to COPII vesicles. The chain is Mitogen-activated protein kinase kinase kinase 7 (Map3k7) from Mus musculus (Mouse).